A 660-amino-acid chain; its full sequence is Pro-secreted protein ORF2 (660 aa).

The signal sequence occupies residues 1 to 19 (MGPRPILLLFLMFLPMLLA). Disordered regions lie at residues 20–43 (PPPGQPSGRRRGRRSGGSGGGFWG) and 66–127 (VTAA…DVDS). The Nuclear localization signal motif lies at 28 to 33 (RRRGRR). The span at 92–116 (QRPAAASRRRPTTAGAAPLTAVAPA) shows a compositional bias: low complexity. Residues Asn137 and Asn310 are each glycosylated (N-linked (GlcNAc...) asparagine; by host). Residues 368-394 (IALTLFNLADTLLGGLPTELISSAGGQ) are particle formation. Asn562 carries an N-linked (GlcNAc...) asparagine; by host glycan. Positions 585 to 610 (TTSLGAGPVSISAVAVLGPHSALALL) are oligomerization.

The protein belongs to the hepevirus capsid protein family. In terms of assembly, homodimer. As to quaternary structure, self-assembles to form the capsid. The capsid is dominated by dimers that define the 30 morphological units. Interacts with phosphorylated protein ORF3. Interacts with host TMEM134. Interacts with host ASGR1 and ASGR2; these interactions facilitate infection of host hepatocytes. Cleaved by host protease in the N-terminus. Post-translationally, N-glycosylated. In terms of processing, not N-glycosylated. The C-terminus of the capsid protein ORF2 is truncated in non-enveloped virions shedded in feces, probably due to host proteases.

It is found in the secreted. The protein resides in the virion. It localises to the host cytoplasm. Its subcellular location is the host endoplasmic reticulum. The protein localises to the host Golgi apparatus. It is found in the host cell surface. Functionally, plays a role in the inhibition of host antibody-mediated neutralization without blocking viral cell entry. Forms an icosahedral capsid with a T=1 symmetry and a 34 nm diameter. The capsid is composed of 60 copies linked to each other. Binds to the 5' end of the genomic RNA to mediate genome encapsidation. Binds to heparin surface proteoglycans (HSPGs) to mediate viral entry. Additionally, the interactions with host ASGR1 and ASGR2 facilitate viral infection of hepatocytes. Inhibits IFN production by blocking host TBK1-induced IRF3 phosphorylation. The nuclear form probably modulates host gene expression. The sequence is that of Pro-secreted protein ORF2 from Bandicota bengalensis (lesser bandicoot rat).